The primary structure comprises 176 residues: Warthog protein 5 (176 aa).

An N-terminal signal peptide occupies residues 1–21 (MCSMWLMASWLMAFVAGSTLA). Asn70 is a glycosylation site (N-linked (GlcNAc...) asparagine).

In terms of tissue distribution, expressed in seam cells, excretory cell, reproductive system, pharynx, pharyngeal-intestinal valve cells, neurons and neuronal support cells.

Its subcellular location is the secreted. Intercellular signal essential for a variety of patterning events during development. The chain is Warthog protein 5 (wrt-5) from Caenorhabditis elegans.